Reading from the N-terminus, the 415-residue chain is Tyrosine--tRNA ligase (415 aa).

Y40 is a binding site for L-tyrosine. The 'HIGH' region motif lies at 45 to 54 (ATAKSLHVGS). Positions 178 and 182 each coordinate L-tyrosine. The 'KMSKS' region signature appears at 238–242 (KMGKS). K241 provides a ligand contact to ATP. Residues 350 to 414 (ASIVQLIVKT…GKKRHALVQL (65 aa)) form the S4 RNA-binding domain.

The protein belongs to the class-I aminoacyl-tRNA synthetase family. TyrS type 1 subfamily. Homodimer.

The protein localises to the cytoplasm. It carries out the reaction tRNA(Tyr) + L-tyrosine + ATP = L-tyrosyl-tRNA(Tyr) + AMP + diphosphate + H(+). Catalyzes the attachment of tyrosine to tRNA(Tyr) in a two-step reaction: tyrosine is first activated by ATP to form Tyr-AMP and then transferred to the acceptor end of tRNA(Tyr). The polypeptide is Tyrosine--tRNA ligase (Ruegeria pomeroyi (strain ATCC 700808 / DSM 15171 / DSS-3) (Silicibacter pomeroyi)).